The primary structure comprises 610 residues: Calmegin (610 aa).

The N-terminal stretch at 1–19 (MHFQAFWLCLGLLFISINA) is a signal peptide. The Lumenal portion of the chain corresponds to 20 to 471 (EFMDDDVETE…LMAAAEGHPW (452 aa)). N6-acetyllysine is present on K128. C151 and C185 are oxidised to a cystine. The disordered stretch occupies residues 258–338 (VPPIKPPKEI…KPDDWNEDTD (81 aa)). The segment covering 263–284 (PPKEIEDPNDKKPEEWDERAKI) has biased composition (basic and acidic residues). 8 consecutive repeat copies span residues 267-280 (IEDPNDKKPEEWDE), 284-297 (IPDPSAVKPEDWDE), 303-316 (IEDSSVVKPAGWLD), 322-335 (IPDPNAEKPDDWNE), 339-352 (GEWEAPQILNPACR), 356-369 (GEWKPPMIDNPKYK), 370-383 (GVWRPPLVDNPNYQ), and 384-397 (GIWSPRKIPNPDYF). Over residues 317–332 (DEPKFIPDPNAEKPDD) the composition is skewed to basic and acidic residues. The interval 317–350 (DEPKFIPDPNAEKPDDWNEDTDGEWEAPQILNPA) is interaction with PPIB. Residues C351 and C355 are joined by a disulfide bond. A helical transmembrane segment spans residues 472–492 (LWLIYLVTAGVPIALITSFCW). Topologically, residues 493–610 (PRKVKKKHKD…SVRKRRVRKD (118 aa)) are cytoplasmic. Residues 521-548 (QEEKEEKAALEKPMDLEEEKKQNDGEML) show a composition bias toward basic and acidic residues. Positions 521 to 610 (QEEKEEKAAL…SVRKRRVRKD (90 aa)) are disordered. The span at 549–571 (EKEEESEPEEKSEEEIEIIEGQE) shows a compositional bias: acidic residues. Phosphoserine occurs at positions 560, 576, 579, 581, 591, 594, and 601. The segment covering 601-610 (SVRKRRVRKD) has biased composition (basic residues).

It belongs to the calreticulin family. As to quaternary structure, interacts with PPIB. Interacts with ADAM2. Interacts with PDILT. As to expression, detected in testis (at protein level). Detected in testis.

The protein resides in the endoplasmic reticulum membrane. Functions during spermatogenesis as a chaperone for a range of client proteins that are important for sperm adhesion onto the egg zona pellucida and for subsequent penetration of the zona pellucida. Required for normal sperm migration from the uterus into the oviduct. Required for normal male fertility. Binds calcium ions. The chain is Calmegin (CLGN) from Homo sapiens (Human).